A 776-amino-acid polypeptide reads, in one-letter code: V-set and immunoglobulin domain-containing protein 10-like 2 (776 aa).

Residues 1–28 form the signal peptide; that stretch reads MVGLSAHHRPLGCRLLILFCLLHPGASG. 5 consecutive Ig-like domains span residues 32–140, 150–234, 242–324, 399–498, and 500–592; these read PTSN…LYLM, PRVQ…AFLD, PVIT…TTVQ, PTLA…LRLE, and PQLT…VLLE. Cystine bridges form between Cys56/Cys122, Cys169/Cys217, Cys268/Cys308, Cys435/Cys480, and Cys521/Cys576. The 101-residue stretch at 608-708 folds into the Fibronectin type-III domain; the sequence is TPPNVTISRL…EVKTPVDPAF (101 aa). Residues Asn611 and Asn637 are each glycosylated (N-linked (GlcNAc...) asparagine). Residues 713-733 form a helical membrane-spanning segment; that stretch reads AVLGAAGTGVVVALATSLLVF.

The protein localises to the membrane. This Mus musculus (Mouse) protein is V-set and immunoglobulin domain-containing protein 10-like 2.